The primary structure comprises 552 residues: FACT complex subunit POB3 (552 aa).

The segment covering 190-205 (KKEESSNEVVPKKEDG) has biased composition (basic and acidic residues). Disordered stretches follow at residues 190–209 (KKEESSNEVVPKKEDGAEGE) and 484–552 (QTAL…PKVE). Acidic residues predominate over residues 490-529 (DSDEEDINMGSAGEDDESVDEDFQVSSDNDADEVAEEFDS). A compositionally biased stretch (basic and acidic residues) spans 541-552 (DEERPSKKPKVE).

This sequence belongs to the SSRP1 family. In terms of assembly, forms a stable heterodimer with SPT16. The SPT16-POB3 dimer weakly associates with multiple molecules of NHP6 (NHP6A or NHP6B) to form the FACT (yFACT or SNP) complex. The FACT complex interacts with the CK2 (casein kinase II) complex subunits CKA1, CKA2, CKB1 and CKB2 and the components of the transcription machinery CHD1, CTR9, PAF1 and CDC73. The FACT complex interacts with the PAF1 complex. SPT16 interacts with SAS3 and POL1. Interacts directly with RFA1.

The protein localises to the nucleus. It is found in the chromosome. Component of the FACT complex, a general chromatin factor that acts to reorganize nucleosomes. The FACT complex is involved in multiple processes that require DNA as a template such as mRNA elongation, DNA replication and DNA repair. During transcription elongation the FACT complex acts as a histone chaperone that both destabilizes and restores nucleosomal structure. It facilitates the passage of RNA polymerase II and transcription by promoting the dissociation of one histone H2A-H2B dimer from the nucleosome, then subsequently promotes the reestablishment of the nucleosome following the passage of RNA polymerase II. Transcription elongation is promoted by the repression of transcription initiation from cryptic sites. Also acts in establishing transcription initiation complexes and promotes SPT15/TBP-binding to a TATA box. Together with replication factor-A protein (RPA), FACT may play a role in nucleosome deposition during DNA replication. The sequence is that of FACT complex subunit POB3 (POB3) from Saccharomyces cerevisiae (strain ATCC 204508 / S288c) (Baker's yeast).